A 292-amino-acid polypeptide reads, in one-letter code: MSASVKESLQLQLLEMEMLFSMFPNQGEVKLEDVNALTNIKRYLEGTREALPPKIEFVITLQIEEPKVKIDLQVTMPHSYPYVALQLFGRSSELDRHQQLLLNKGLTSYIGTFDPGELCVCAAIQWLQDNSASYFLSRKLVYEPSTQAKPVKNTFLRMWIYSHHIYQQDLRKKILDVGKRLDVTGFCMTGKPGIICVEGFKEHCEEFWHTIRYPNWKHISCKHAESVETEGNGEDLRLFHSFEELLLEAHGDYGLRNDYHMNLGQFLEFLKKHKSEHVFQILFGIESKSSDS.

The region spanning 14–134 (LEMEMLFSMF…QWLQDNSASY (121 aa)) is the RWD domain.

The polypeptide is RWD domain-containing protein 2A (RWDD2A) (Macaca fascicularis (Crab-eating macaque)).